Reading from the N-terminus, the 298-residue chain is Nucleotide-binding protein RSKD131_3085 (298 aa).

Residue 11–18 coordinates ATP; it reads GPSGAGRT. Residue 58-61 participates in GTP binding; the sequence is DVRN.

It belongs to the RapZ-like family.

Functionally, displays ATPase and GTPase activities. In Cereibacter sphaeroides (strain KD131 / KCTC 12085) (Rhodobacter sphaeroides), this protein is Nucleotide-binding protein RSKD131_3085.